A 190-amino-acid polypeptide reads, in one-letter code: Segregation and condensation protein B (190 aa).

Belongs to the ScpB family. As to quaternary structure, homodimer. Homodimerization may be required to stabilize the binding of ScpA to the Smc head domains. Component of a cohesin-like complex composed of ScpA, ScpB and the Smc homodimer, in which ScpA and ScpB bind to the head domain of Smc. The presence of the three proteins is required for the association of the complex with DNA.

It localises to the cytoplasm. In terms of biological role, participates in chromosomal partition during cell division. May act via the formation of a condensin-like complex containing Smc and ScpA that pull DNA away from mid-cell into both cell halves. The sequence is that of Segregation and condensation protein B from Bacillus cereus (strain B4264).